The following is a 405-amino-acid chain: Acetyl-CoA decarbonylase/synthase complex subunit delta (405 aa).

Belongs to the CdhD family. Heterodimer of delta and gamma chains. The ACDS complex is made up of alpha, epsilon, beta, gamma and delta chains with a probable stoichiometry of (alpha(2)epsilon(2))(4)-beta(8)-(gamma(1)delta(1))(8).

Part of a complex that catalyzes the reversible cleavage of acetyl-CoA, allowing autotrophic growth from CO(2). Probably maintains the overall quaternary structure of the ACDS complex. The chain is Acetyl-CoA decarbonylase/synthase complex subunit delta from Methanocaldococcus jannaschii (strain ATCC 43067 / DSM 2661 / JAL-1 / JCM 10045 / NBRC 100440) (Methanococcus jannaschii).